The following is a 65-amino-acid chain: Protein C' (65 aa).

This sequence belongs to the rhabdoviruses C protein family.

In terms of biological role, seems to stimulates transcription by the viral polymerase. May play a role in viral pathogenesis or transmission by insects vectors. This is Protein C' (P) from Aedes (Bovine).